A 387-amino-acid chain; its full sequence is Succinate--CoA ligase [ADP-forming] subunit beta (387 aa).

The 228-residue stretch at 9–236 (RDLFEKYGVP…KAAADPLEAK (228 aa)) folds into the ATP-grasp domain. ATP contacts are provided by residues K45, 52–54 (GRG), A94, and E99. Residues N191 and D205 each coordinate Mg(2+). Residues N256 and 318 to 320 (GIT) each bind substrate.

It belongs to the succinate/malate CoA ligase beta subunit family. In terms of assembly, heterotetramer of two alpha and two beta subunits. Mg(2+) serves as cofactor.

The enzyme catalyses succinate + ATP + CoA = succinyl-CoA + ADP + phosphate. It carries out the reaction GTP + succinate + CoA = succinyl-CoA + GDP + phosphate. Its pathway is carbohydrate metabolism; tricarboxylic acid cycle; succinate from succinyl-CoA (ligase route): step 1/1. Its function is as follows. Succinyl-CoA synthetase functions in the citric acid cycle (TCA), coupling the hydrolysis of succinyl-CoA to the synthesis of either ATP or GTP and thus represents the only step of substrate-level phosphorylation in the TCA. The beta subunit provides nucleotide specificity of the enzyme and binds the substrate succinate, while the binding sites for coenzyme A and phosphate are found in the alpha subunit. This chain is Succinate--CoA ligase [ADP-forming] subunit beta, found in Leifsonia xyli subsp. xyli (strain CTCB07).